Reading from the N-terminus, the 262-residue chain is Nurim (262 aa).

At 1-4 the chain is on the nuclear side; it reads MAPA. A helical transmembrane segment spans residues 5-28; the sequence is LLLVPAALASFVLAFGTGVEFVRF. Residues 29 to 58 lie on the Perinuclear space side of the membrane; sequence TSLRPLLGGIPESGGPDARHGWLAALQDRS. Residues 59-80 traverse the membrane as a helical segment; the sequence is ILASLAWDLCLLLLFVVQHSLM. Topologically, residues 81-97 are nuclear; that stretch reads ATEAVKAWTSRYFGVLQ. Residues 98-114 traverse the membrane as a helical segment; the sequence is RSLYVACTALALQLVMR. Topologically, residues 115-133 are perinuclear space; it reads YWEATPRGPVLWEARAEPW. Residues 134 to 164 form a helical membrane-spanning segment; the sequence is ATWVPLLCFVLHVVSWLLIFSILLVFDYAEL. The Nuclear segment spans residues 165-191; it reads MGLKQVYYHVLGLGEPLSLKSPRALRL. A helical membrane pass occupies residues 192–210; the sequence is FSHLRHPVCVELLTVLWVV. Residues 211-216 lie on the Perinuclear space side of the membrane; the sequence is PTLGTD. Residues 217-234 form a helical membrane-spanning segment; sequence RLLLALLFTLYLGLAHGL. The Nuclear segment spans residues 235–262; sequence DQQDLRYLRSQLQRKLQLLSRPQDGEAE.

This sequence belongs to the nurim family.

The protein resides in the nucleus inner membrane. The protein is Nurim (Nrm) of Rattus norvegicus (Rat).